The chain runs to 317 residues: Sperm acrosome membrane-associated protein 6 (317 aa).

The first 18 residues, Met1 to Ala18, serve as a signal peptide directing secretion. Residues Phe19 to Pro281 are Extracellular-facing. 5 disulfides stabilise this stretch: Cys21-Cys143, Cys24-Cys146, Cys35-Cys51, Cys128-Cys151, and Cys132-Cys157. A glycan (N-linked (GlcNAc...) asparagine) is linked at Asn29. The region spanning Pro123–Val237 is the Ig-like domain. An N-linked (GlcNAc...) asparagine glycan is attached at Asn168. An intrachain disulfide couples Cys174 to Cys227. Residues Ala282–Met302 traverse the membrane as a helical segment. Topologically, residues Cys303–Ala317 are cytoplasmic.

Belongs to the SPACA6 family. In terms of assembly, forms a complex with izumo1 and tmem81 on spermatocyte cell membrane. The complex binds to oocyte protein bncr. In terms of tissue distribution, expressed in testis.

Its subcellular location is the cytoplasmic vesicle. It localises to the secretory vesicle. The protein resides in the acrosome membrane. Its function is as follows. Sperm protein required for fusion of sperm with the egg membrane during fertilization. May regulate the expression of sperm surface protein DCST2. The sequence is that of Sperm acrosome membrane-associated protein 6 from Danio rerio (Zebrafish).